Consider the following 332-residue polypeptide: uncharacterized protein (332 aa).

This sequence belongs to the bacterial solute-binding protein 1 family. WtpA subfamily.

This is an uncharacterized protein from Methanococcus maripaludis (strain DSM 14266 / JCM 13030 / NBRC 101832 / S2 / LL).